The primary structure comprises 341 residues: L-threonine 3-dehydrogenase (341 aa).

Cys38 provides a ligand contact to Zn(2+). Catalysis depends on charge relay system residues Thr40 and His43. Zn(2+)-binding residues include His63, Glu64, Cys93, Cys96, Cys99, and Cys107. Residues Ile175, Asp195, Arg200, 262-264 (LGI), and 286-287 (IY) each bind NAD(+).

This sequence belongs to the zinc-containing alcohol dehydrogenase family. In terms of assembly, homotetramer. Zn(2+) serves as cofactor.

The protein localises to the cytoplasm. It catalyses the reaction L-threonine + NAD(+) = (2S)-2-amino-3-oxobutanoate + NADH + H(+). Its pathway is amino-acid degradation; L-threonine degradation via oxydo-reductase pathway; glycine from L-threonine: step 1/2. Catalyzes the NAD(+)-dependent oxidation of L-threonine to 2-amino-3-ketobutyrate. The polypeptide is L-threonine 3-dehydrogenase (Shewanella woodyi (strain ATCC 51908 / MS32)).